The following is a 109-amino-acid chain: UPF0449 protein C19orf25 homolog (109 aa).

Residue Tyr63 is modified to Phosphotyrosine.

It belongs to the UPF0449 family.

In Rattus norvegicus (Rat), this protein is UPF0449 protein C19orf25 homolog.